Consider the following 476-residue polypeptide: Bifunctional protein HldE (476 aa).

The segment at methionine 1 to glycine 320 is ribokinase. Asparagine 196–glutamate 199 is an ATP binding site. The active site involves aspartate 265. The cytidylyltransferase stretch occupies residues phenylalanine 345–aspartate 476.

The protein in the N-terminal section; belongs to the carbohydrate kinase PfkB family. It in the C-terminal section; belongs to the cytidylyltransferase family. In terms of assembly, homodimer.

The catalysed reaction is D-glycero-beta-D-manno-heptose 7-phosphate + ATP = D-glycero-beta-D-manno-heptose 1,7-bisphosphate + ADP + H(+). The enzyme catalyses D-glycero-beta-D-manno-heptose 1-phosphate + ATP + H(+) = ADP-D-glycero-beta-D-manno-heptose + diphosphate. The protein operates within nucleotide-sugar biosynthesis; ADP-L-glycero-beta-D-manno-heptose biosynthesis; ADP-L-glycero-beta-D-manno-heptose from D-glycero-beta-D-manno-heptose 7-phosphate: step 1/4. It participates in nucleotide-sugar biosynthesis; ADP-L-glycero-beta-D-manno-heptose biosynthesis; ADP-L-glycero-beta-D-manno-heptose from D-glycero-beta-D-manno-heptose 7-phosphate: step 3/4. Functionally, catalyzes the phosphorylation of D-glycero-D-manno-heptose 7-phosphate at the C-1 position to selectively form D-glycero-beta-D-manno-heptose-1,7-bisphosphate. Catalyzes the ADP transfer from ATP to D-glycero-beta-D-manno-heptose 1-phosphate, yielding ADP-D-glycero-beta-D-manno-heptose. This chain is Bifunctional protein HldE, found in Alcanivorax borkumensis (strain ATCC 700651 / DSM 11573 / NCIMB 13689 / SK2).